Reading from the N-terminus, the 191-residue chain is Adenylate kinase (191 aa).

ATP is bound at residue 12–17 (GSGKTT). The interval 34–63 (STGDLLRAESAKKTERGLLIEKFTSQGELV) is NMP. AMP-binding positions include T35, R40, 61 to 63 (ELV), 88 to 91 (GYPR), and Q95. The interval 130–136 (GRSRGAD) is LID. An ATP-binding site is contributed by R131. Residues R133 and R145 each coordinate AMP. An ATP-binding site is contributed by R173.

It belongs to the adenylate kinase family. As to quaternary structure, monomer.

The protein localises to the cytoplasm. It catalyses the reaction AMP + ATP = 2 ADP. The protein operates within purine metabolism; AMP biosynthesis via salvage pathway; AMP from ADP: step 1/1. Its function is as follows. Catalyzes the reversible transfer of the terminal phosphate group between ATP and AMP. Plays an important role in cellular energy homeostasis and in adenine nucleotide metabolism. This chain is Adenylate kinase, found in Helicobacter pylori (strain G27).